The chain runs to 418 residues: Multidrug resistance protein MdtG (418 aa).

A run of 11 helical transmembrane segments spans residues 19–39 (IGCF…PLYV), 56–76 (LVFS…GGLA), 90–110 (LGMA…QFLI), 113–133 (ALLG…ATQI), 144–164 (TLST…GVLA), 171–191 (PVFF…LLFI), 222–242 (LFVT…ILTL), 251–271 (VANI…AALI), 288–308 (ILIA…FVQT), 317–337 (FLLG…LVYN), and 376–396 (AVFL…GLSL).

It belongs to the major facilitator superfamily. DHA1 family. MdtG (TC 2.A.1.2.20) subfamily.

The protein resides in the cell inner membrane. This is Multidrug resistance protein MdtG from Enterobacter lignolyticus (strain SCF1).